The sequence spans 359 residues: Phospho-N-acetylmuramoyl-pentapeptide-transferase (359 aa).

Transmembrane regions (helical) follow at residues Gln3 to Ile23, Val55 to Phe75, Ile80 to Leu100, Thr117 to Phe137, Ile156 to Ala176, Leu187 to Phe207, Leu231 to Ala251, Ile255 to Thr275, Ile280 to Ile300, and Phe334 to Leu354.

This sequence belongs to the glycosyltransferase 4 family. MraY subfamily. It depends on Mg(2+) as a cofactor.

Its subcellular location is the cell membrane. It carries out the reaction UDP-N-acetyl-alpha-D-muramoyl-L-alanyl-gamma-D-glutamyl-meso-2,6-diaminopimeloyl-D-alanyl-D-alanine + di-trans,octa-cis-undecaprenyl phosphate = di-trans,octa-cis-undecaprenyl diphospho-N-acetyl-alpha-D-muramoyl-L-alanyl-D-glutamyl-meso-2,6-diaminopimeloyl-D-alanyl-D-alanine + UMP. It participates in cell wall biogenesis; peptidoglycan biosynthesis. Functionally, catalyzes the initial step of the lipid cycle reactions in the biosynthesis of the cell wall peptidoglycan: transfers peptidoglycan precursor phospho-MurNAc-pentapeptide from UDP-MurNAc-pentapeptide onto the lipid carrier undecaprenyl phosphate, yielding undecaprenyl-pyrophosphoryl-MurNAc-pentapeptide, known as lipid I. The polypeptide is Phospho-N-acetylmuramoyl-pentapeptide-transferase (Mycobacterium ulcerans (strain Agy99)).